The chain runs to 483 residues: Serine/threonine-protein phosphatase 2A regulatory subunit phr2AB (483 aa).

WD repeat units lie at residues 22-61 (SDANVVPAIEFDQTGDFIAVGDKGGKVLLLKRTHDKQSSK) and 88-129 (EIEE…IKQV). The segment at 132-152 (SATTTGPSYNGSLASNNTRSP) is disordered. 4 WD repeats span residues 206–244 (AHAYHINSISLNSDGETYISSDDLRIHLWNLNINTECFN), 255–295 (DLTE…LCDN), 314–352 (EIISSISDIKFSRDGRYILSRDFLTLKLWDINMENKPVK), and 369–410 (ENDC…DVCL). The disordered stretch occupies residues 421–443 (TKTLTTKMKLRSSKKEPKKPEDI). Residues 433–443 (SKKEPKKPEDI) show a composition bias toward basic and acidic residues. Residues 449 to 483 (EYTKKTLHCAWHPKDNLIAVGAANTVYLYAATENK) form a WD 7 repeat.

Belongs to the phosphatase 2A regulatory subunit B family. In terms of assembly, PP2A consists of a trimeric holoenzyme, composed of a 37 kDa catalytic subunit (C subunit) and a 65 kDa constant regulatory subunit (A subunit), that associates with a variety of regulatory subunits (B subunit) such as phr2AB (B55) and psrA (B56 homolog). The trimer may partially dissociates into a core 'AC' dimer equally active compared to the trimer.

The protein resides in the cytoplasm. It is found in the cytosol. It localises to the cytoskeleton. The protein localises to the microtubule organizing center. Its subcellular location is the centrosome. Functionally, the B regulatory subunit might modulate substrate selectivity and catalytic activity, and might also direct the localization of the catalytic enzyme to a particular subcellular compartment. In Dictyostelium discoideum (Social amoeba), this protein is Serine/threonine-protein phosphatase 2A regulatory subunit phr2AB (phr2aB).